The chain runs to 904 residues: MAASVENRQFSHIEAGLSRSFKPRSDSPVRGCNFPPPNSTNFQKKPNSTIFLDYSSSEDDDDDDEKNEYLQMIKKGNSELEPSVHDSRDEGTADNWIERNFSLIRLTGKHPFNSEPPLNRLMHHGFITPVPLHYVRNHGPVPKGTWDDWTVEVTGLVKRPMKFTMDQLVNEFPSRELPVTLVCAGNRRKEQNMVKQTIGFNWGAAAVSTTVWRGVPLRALLKRYGVFSKNKGALNVCFEGADVLPGGGGSKYGTSIKKEFAMDPARDIIIAYMQNGEKLAPDHGFPVRMIIPGFIGGRMVKWIKRIIVTTQESDSYYHFKDNRVLPPHVDAELANTEAWWYKPEYIINELNINSVITTPCHEEILPINAWTTQRPYTLRGYSYSGGGKKVTRVEVTLDGGETWQVCTLDHPEKPTKYGKYWCWCFWSLEVEVLDLLSAKEIAVRAWDETLNTQPEKLIWNVMGMMNNCWFRVKMNVCKPHKGEIGIVFEHPTQPGNQSGGWMAKERHLEISAEAPPTLKKSISTPFMNTASKMYSMSEVRKHSSADSAWIIVHGHIYDATRFLKDHPGGSDSILINAGTDCTEEFDAIHSDKAKKLLEEFRIGELLTTGYTSDSPGNSVHGSSSFSSFLAPIKELVPAQRSVALIPREKIPCKLIDKQSISPDVRKFRFALPSEDQVLGLPVGKHIFLCAVIDDKLCMRAYTPTSTIDEVGYFELVVKIYFKGIHPKFPNGGQMSQYLDSLQLGSFLDVKGPLGHIEYQGKGNFLVHGKQKFAKKLAMIAGGTGITPVYQVMQAILKDPEDDTEMYVVYANRTEDDILLKEELDSWAEKIPERVKVWYVVQDSIKEGWKYSLGFISEAILREHIPEPSHTTLALACGPPPMIQFAVNPNLEKMGYDIKDSLLVF.

Composition is skewed to polar residues over residues 1-10 and 39-50; these read MAASVENRQF and STNFQKKPNSTI. The disordered stretch occupies residues 1–65; sequence MAASVENRQF…SSEDDDDDDE (65 aa). Positions 56 to 65 are enriched in acidic residues; it reads SSEDDDDDDE. Cys183 is a binding site for Mo-molybdopterin. The Cytochrome b5 heme-binding domain maps to 531-606; it reads SKMYSMSEVR…LEEFRIGELL (76 aa). Heme contacts are provided by His566 and His589. The FAD-binding FR-type domain occupies 647–759; sequence REKIPCKLID…KGPLGHIEYQ (113 aa). FAD-binding positions include 699-702, 716-720, Phe721, Phe728, 733-735, and Thr786; these read RAYT, VVKIY, and QMS.

The protein belongs to the nitrate reductase family. As to quaternary structure, homodimer. FAD is required as a cofactor. Requires heme as cofactor. It depends on Mo-molybdopterin as a cofactor.

The catalysed reaction is nitrite + NAD(+) + H2O = nitrate + NADH + H(+). Its activity is regulated as follows. Regulated by the nitrogen source and controlled by the circadian rhythm. Nitrate reductase is a key enzyme involved in the first step of nitrate assimilation in plants, fungi and bacteria. The sequence is that of Nitrate reductase [NADH] 1 (NIA1) from Nicotiana tabacum (Common tobacco).